A 173-amino-acid chain; its full sequence is Co-chaperone protein HscB homolog (173 aa).

The J domain occupies 5-77 (CHFALFELQP…AQRARYLLTI (73 aa)).

Belongs to the HscB family. In terms of assembly, interacts with HscA and stimulates its ATPase activity.

Functionally, co-chaperone involved in the maturation of iron-sulfur cluster-containing proteins. Seems to help targeting proteins to be folded toward HscA. The chain is Co-chaperone protein HscB homolog from Pseudomonas fluorescens (strain Pf0-1).